Consider the following 437-residue polypeptide: Glutamate-1-semialdehyde 2,1-aminomutase (437 aa).

The residue at position 274 (lysine 274) is an N6-(pyridoxal phosphate)lysine.

The protein belongs to the class-III pyridoxal-phosphate-dependent aminotransferase family. HemL subfamily. As to quaternary structure, homodimer. Pyridoxal 5'-phosphate serves as cofactor.

Its subcellular location is the cytoplasm. It catalyses the reaction (S)-4-amino-5-oxopentanoate = 5-aminolevulinate. Its pathway is porphyrin-containing compound metabolism; protoporphyrin-IX biosynthesis; 5-aminolevulinate from L-glutamyl-tRNA(Glu): step 2/2. The protein is Glutamate-1-semialdehyde 2,1-aminomutase of Verminephrobacter eiseniae (strain EF01-2).